A 59-amino-acid polypeptide reads, in one-letter code: Cytochrome c oxidase subunit 9, mitochondrial (59 aa).

Residues 2–8 (TIAPITG) lie on the Mitochondrial matrix side of the membrane. A helical membrane pass occupies residues 9-44 (TIKRRVIMDIVLGFSLGGVMASYWWWGFHMDKINKR). The Mitochondrial intermembrane portion of the chain corresponds to 45 to 56 (EKFYAELAERKK). Residues 57-59 (QEN) constitute a propeptide, removed in mature form.

The protein belongs to the fungal cytochrome c oxidase subunit 7a family. As to quaternary structure, component of the cytochrome c oxidase (complex IV, CIV), a multisubunit enzyme composed of 12 subunits. The complex is composed of a catalytic core of 3 subunits COX1, COX2 and COX3, encoded in the mitochondrial DNA, and 9 supernumerary subunits COX4, COX5A (or COX5B), COX6, COX7, COX8, COX9, COX12, COX13 and COX26, which are encoded in the nuclear genome. The complex exists as a monomer or a dimer and forms supercomplexes (SCs) in the inner mitochondrial membrane with a dimer of ubiquinol-cytochrome c oxidoreductase (cytochrome b-c1 complex, complex III, CIII), resulting in 2 different assemblies (supercomplexes III(2)IV and III(2)IV(2)).

The protein localises to the mitochondrion inner membrane. It functions in the pathway energy metabolism; oxidative phosphorylation. Component of the cytochrome c oxidase, the last enzyme in the mitochondrial electron transport chain which drives oxidative phosphorylation. The respiratory chain contains 3 multisubunit complexes succinate dehydrogenase (complex II, CII), ubiquinol-cytochrome c oxidoreductase (cytochrome b-c1 complex, complex III, CIII) and cytochrome c oxidase (complex IV, CIV), that cooperate to transfer electrons derived from NADH and succinate to molecular oxygen, creating an electrochemical gradient over the inner membrane that drives transmembrane transport and the ATP synthase. Cytochrome c oxidase is the component of the respiratory chain that catalyzes the reduction of oxygen to water. Electrons originating from reduced cytochrome c in the intermembrane space (IMS) are transferred via the dinuclear copper A center (CU(A)) of COX2 and heme A of COX1 to the active site in COX1, a binuclear center (BNC) formed by heme A3 and copper B (CU(B)). The BNC reduces molecular oxygen to 2 water molecules using 4 electrons from cytochrome c in the IMS and 4 protons from the mitochondrial matrix. This is Cytochrome c oxidase subunit 9, mitochondrial (COX9) from Saccharomyces cerevisiae (strain ATCC 204508 / S288c) (Baker's yeast).